The following is a 184-amino-acid chain: ATP synthase subunit b, chloroplastic (184 aa).

Residues 27–49 form a helical membrane-spanning segment; the sequence is LATNPINLSVVLGVLIFFGKGVL.

It belongs to the ATPase B chain family. In terms of assembly, F-type ATPases have 2 components, F(1) - the catalytic core - and F(0) - the membrane proton channel. F(1) has five subunits: alpha(3), beta(3), gamma(1), delta(1), epsilon(1). F(0) has four main subunits: a(1), b(1), b'(1) and c(10-14). The alpha and beta chains form an alternating ring which encloses part of the gamma chain. F(1) is attached to F(0) by a central stalk formed by the gamma and epsilon chains, while a peripheral stalk is formed by the delta, b and b' chains.

The protein resides in the plastid. Its subcellular location is the chloroplast thylakoid membrane. Its function is as follows. F(1)F(0) ATP synthase produces ATP from ADP in the presence of a proton or sodium gradient. F-type ATPases consist of two structural domains, F(1) containing the extramembraneous catalytic core and F(0) containing the membrane proton channel, linked together by a central stalk and a peripheral stalk. During catalysis, ATP synthesis in the catalytic domain of F(1) is coupled via a rotary mechanism of the central stalk subunits to proton translocation. Component of the F(0) channel, it forms part of the peripheral stalk, linking F(1) to F(0). The polypeptide is ATP synthase subunit b, chloroplastic (Citrus sinensis (Sweet orange)).